We begin with the raw amino-acid sequence, 196 residues long: 3-dehydroquinate dehydratase (196 aa).

3-dehydroquinate is bound by residues 23 to 25 (ELR) and R45. Catalysis depends on H98, which acts as the Proton donor/acceptor. Catalysis depends on K122, which acts as the Schiff-base intermediate with substrate. Residues R159 and Q182 each contribute to the 3-dehydroquinate site.

It belongs to the type-I 3-dehydroquinase family. Homodimer.

It catalyses the reaction 3-dehydroquinate = 3-dehydroshikimate + H2O. Its pathway is metabolic intermediate biosynthesis; chorismate biosynthesis; chorismate from D-erythrose 4-phosphate and phosphoenolpyruvate: step 3/7. In terms of biological role, involved in the third step of the chorismate pathway, which leads to the biosynthesis of aromatic amino acids. Catalyzes the cis-dehydration of 3-dehydroquinate (DHQ) and introduces the first double bond of the aromatic ring to yield 3-dehydroshikimate. This Archaeoglobus fulgidus (strain ATCC 49558 / DSM 4304 / JCM 9628 / NBRC 100126 / VC-16) protein is 3-dehydroquinate dehydratase.